Reading from the N-terminus, the 127-residue chain is Small ribosomal subunit protein uS13 (127 aa).

The disordered stretch occupies residues 95–127 (GLPVHGQRTSTNARTRKGPRRAAVKKKGGAKKK). Residues 108–127 (RTRKGPRRAAVKKKGGAKKK) are compositionally biased toward basic residues.

It belongs to the universal ribosomal protein uS13 family. Part of the 30S ribosomal subunit. Forms a loose heterodimer with protein S19. Forms two bridges to the 50S subunit in the 70S ribosome.

In terms of biological role, located at the top of the head of the 30S subunit, it contacts several helices of the 16S rRNA. In the 70S ribosome it contacts the 23S rRNA (bridge B1a) and protein L5 of the 50S subunit (bridge B1b), connecting the 2 subunits; these bridges are implicated in subunit movement. Contacts the tRNAs in the A and P-sites. This is Small ribosomal subunit protein uS13 from Desulfatibacillum aliphaticivorans.